The primary structure comprises 340 residues: Glycerol-3-phosphate dehydrogenase [NAD(P)+] (340 aa).

Trp11, Arg33, and Lys110 together coordinate NADPH. Residues Lys110, Gly144, and Ser146 each coordinate sn-glycerol 3-phosphate. Ala148 serves as a coordination point for NADPH. Residues Lys199, Asp252, Ser262, Arg263, and Asn264 each contribute to the sn-glycerol 3-phosphate site. Residue Lys199 is the Proton acceptor of the active site. Arg263 contributes to the NADPH binding site. NADPH is bound by residues Val287 and Glu289.

This sequence belongs to the NAD-dependent glycerol-3-phosphate dehydrogenase family.

The protein resides in the cytoplasm. It carries out the reaction sn-glycerol 3-phosphate + NAD(+) = dihydroxyacetone phosphate + NADH + H(+). It catalyses the reaction sn-glycerol 3-phosphate + NADP(+) = dihydroxyacetone phosphate + NADPH + H(+). Its pathway is membrane lipid metabolism; glycerophospholipid metabolism. Catalyzes the reduction of the glycolytic intermediate dihydroxyacetone phosphate (DHAP) to sn-glycerol 3-phosphate (G3P), the key precursor for phospholipid synthesis. The protein is Glycerol-3-phosphate dehydrogenase [NAD(P)+] of Polynucleobacter asymbioticus (strain DSM 18221 / CIP 109841 / QLW-P1DMWA-1) (Polynucleobacter necessarius subsp. asymbioticus).